The chain runs to 969 residues: Rab3 GTPase-activating protein catalytic subunit (969 aa).

Basic and acidic residues predominate over residues D532–G549. The tract at residues D532–T613 is disordered. Residues A550–W572 show a composition bias toward low complexity. Residues S573–M589 are compositionally biased toward acidic residues. The segment covering K590 to L608 has biased composition (basic and acidic residues).

It belongs to the Rab3-GAP catalytic subunit family. As to quaternary structure, the Rab3 GTPase-activating complex is a heterodimer composed of rab3gap1 and rab3gap2. The Rab3 GTPase-activating complex interacts with DMXL2. Interacts with LMAN1.

It localises to the cytoplasm. The protein resides in the endoplasmic reticulum. It is found in the golgi apparatus. The protein localises to the cis-Golgi network. Catalytic subunit of the Rab3 GTPase-activating (Rab3GAP) complex composed of rab3gap1 and rab3gap2, which has GTPase-activating protein (GAP) activity towards various Rab3 subfamily members (RAB3A, RAB3B, RAB3C and RAB3D), RAB5A and RAB43, and guanine nucleotide exchange factor (GEF) activity towards RAB18. As part of the Rab3GAP complex, acts as a GAP for Rab3 proteins by converting active RAB3-GTP to the inactive form RAB3-GDP. Rab3 proteins are involved in regulated exocytosis of neurotransmitters and hormones. The Rab3GAP complex, acts as a GEF for RAB18 by promoting the conversion of inactive RAB18-GDP to the active form RAB18-GTP. Recruits and stabilizes RAB18 at the cis-Golgi membrane where RAB18 is most likely activated. Also involved in RAB18 recruitment at the endoplasmic reticulum (ER) membrane where it maintains proper ER structure. Required for normal eye and brain development. May participate in neurodevelopmental processes such as proliferation, migration and differentiation before synapse formation, and non-synaptic vesicular release of neurotransmitters. In Danio rerio (Zebrafish), this protein is Rab3 GTPase-activating protein catalytic subunit (rab3gap1).